The sequence spans 103 residues: MRKLRCKQMIPKLLPFIFIYLSVANKIMFYCILNERAFKHYKTYRRITDCPEIKNKKSRRKNQRNSSSIGLSNPNKFSIYIYIYFFFYSFLCSPYLFKYISLF.

2 helical membrane passes run 13 to 33 and 77 to 97; these read LLPF…YCIL and FSIY…PYLF.

The protein localises to the endoplasmic reticulum membrane. This is an uncharacterized protein from Schizosaccharomyces pombe (strain 972 / ATCC 24843) (Fission yeast).